A 1395-amino-acid chain; its full sequence is G-protein coupled receptor-associated sorting protein 1 (1395 aa).

3 disordered regions span residues 1–25, 45–83, and 269–288; these read MTGA…VVGG, QIMP…AKAI, and TNTW…FRSK. Residues 269-281 show a composition bias toward basic and acidic residues; it reads TNTWSGPREDPNS. Position 297 is a phosphoserine (serine 297). Positions 446-469 are disordered; the sequence is SMGTGASSKSRPRTDGERIGDSLF. Over residues 457-469 the composition is skewed to basic and acidic residues; it reads PRTDGERIGDSLF. Serine 631 and serine 899 each carry phosphoserine. The interval 899–1395 is OPRD1-binding; the sequence is SETEEETIFG…QNDPEGDQEN (497 aa).

It belongs to the GPRASP family. As to quaternary structure, interacts with cytoplasmic tails of a variety of G-protein coupled receptors such as D2 dopamine receptor/DRD2, delta opioid receptor/OPRD1, beta-2 adrenergic receptor/ADRB2 and D4 dopamine receptor/DRD4. Interacts with PER1. Interacts with BECN2; the interaction is direct. In terms of tissue distribution, expressed in the brain, with lower expression in medulla, spinal cord and substantia nigra.

The protein localises to the cytoplasm. Modulates lysosomal sorting and functional down-regulation of a variety of G-protein coupled receptors. Targets receptors for degradation in lysosomes via its interaction with BECN2. The chain is G-protein coupled receptor-associated sorting protein 1 (GPRASP1) from Homo sapiens (Human).